A 332-amino-acid chain; its full sequence is tRNA U34 carboxymethyltransferase (332 aa).

Residues K96, W110, K115, G135, 157–159 (DPT), 190–191 (IE), M205, Y209, and R324 each bind carboxy-S-adenosyl-L-methionine.

It belongs to the class I-like SAM-binding methyltransferase superfamily. CmoB family. In terms of assembly, homotetramer.

The catalysed reaction is carboxy-S-adenosyl-L-methionine + 5-hydroxyuridine(34) in tRNA = 5-carboxymethoxyuridine(34) in tRNA + S-adenosyl-L-homocysteine + H(+). Catalyzes carboxymethyl transfer from carboxy-S-adenosyl-L-methionine (Cx-SAM) to 5-hydroxyuridine (ho5U) to form 5-carboxymethoxyuridine (cmo5U) at position 34 in tRNAs. The sequence is that of tRNA U34 carboxymethyltransferase from Alteromonas mediterranea (strain DSM 17117 / CIP 110805 / LMG 28347 / Deep ecotype).